Consider the following 411-residue polypeptide: Tyrosine--tRNA ligase (411 aa).

L-tyrosine is bound at residue Tyr34. The 'HIGH' region motif lies at 39-48 (CTATSLHIGS). L-tyrosine is bound by residues Tyr171 and Gln175. The 'KMSKS' region signature appears at 231–235 (KMGKT). An ATP-binding site is contributed by Lys234. In terms of domain architecture, S4 RNA-binding spans 345 to 411 (ISAYELFHEA…GKKRHILVRV (67 aa)).

This sequence belongs to the class-I aminoacyl-tRNA synthetase family. TyrS type 1 subfamily. Homodimer.

It localises to the cytoplasm. It catalyses the reaction tRNA(Tyr) + L-tyrosine + ATP = L-tyrosyl-tRNA(Tyr) + AMP + diphosphate + H(+). In terms of biological role, catalyzes the attachment of tyrosine to tRNA(Tyr) in a two-step reaction: tyrosine is first activated by ATP to form Tyr-AMP and then transferred to the acceptor end of tRNA(Tyr). This Rickettsia africae (strain ESF-5) protein is Tyrosine--tRNA ligase.